Reading from the N-terminus, the 623-residue chain is Low affinity potassium transport system protein Kup (623 aa).

12 helical membrane-spanning segments follow: residues 9–29 (LPAI…TSPL), 49–69 (VFGF…FKYL), 101–121 (VLVI…VITP), 137–157 (PSLD…LFMI), 163–183 (GMVG…LAVL), 212–232 (AVSF…EALY), 247–267 (WFSV…ALLL), 276–296 (PFFL…ATLA), 337–357 (IYIP…IVSF), 363–383 (LAAA…ILFA), 395–415 (ILVG…FSAN), and 419–439 (LFSG…IMTT).

Belongs to the HAK/KUP transporter (TC 2.A.72) family.

The protein localises to the cell inner membrane. The catalysed reaction is K(+)(in) + H(+)(in) = K(+)(out) + H(+)(out). In terms of biological role, responsible for the low-affinity transport of potassium into the cell. Likely operates as a K(+):H(+) symporter. This is Low affinity potassium transport system protein Kup from Cronobacter sakazakii (strain ATCC BAA-894) (Enterobacter sakazakii).